A 447-amino-acid polypeptide reads, in one-letter code: tRNA-2-methylthio-N(6)-dimethylallyladenosine synthase (447 aa).

Residues 3-120 (KKLYIETHGC…LPEMIDAART (118 aa)) form the MTTase N-terminal domain. [4Fe-4S] cluster-binding residues include C12, C49, C83, C157, C161, and C164. The Radical SAM core domain occupies 143–375 (RVDGPSAFVS…QHRINQYGFE (233 aa)). One can recognise a TRAM domain in the interval 378 to 442 (RRMVGTVQRI…PHSLRGTLLD (65 aa)).

The protein belongs to the methylthiotransferase family. MiaB subfamily. As to quaternary structure, monomer. It depends on [4Fe-4S] cluster as a cofactor.

Its subcellular location is the cytoplasm. The enzyme catalyses N(6)-dimethylallyladenosine(37) in tRNA + (sulfur carrier)-SH + AH2 + 2 S-adenosyl-L-methionine = 2-methylsulfanyl-N(6)-dimethylallyladenosine(37) in tRNA + (sulfur carrier)-H + 5'-deoxyadenosine + L-methionine + A + S-adenosyl-L-homocysteine + 2 H(+). In terms of biological role, catalyzes the methylthiolation of N6-(dimethylallyl)adenosine (i(6)A), leading to the formation of 2-methylthio-N6-(dimethylallyl)adenosine (ms(2)i(6)A) at position 37 in tRNAs that read codons beginning with uridine. This chain is tRNA-2-methylthio-N(6)-dimethylallyladenosine synthase, found in Ectopseudomonas mendocina (strain ymp) (Pseudomonas mendocina).